Here is a 583-residue protein sequence, read N- to C-terminus: MSQAVIFKPFVSVPSSNHSQRKLQNNIINVGVKIQNRFRVVCMGMLAPRKFLQKRRKMEVFKDAADETDQKRWRGLMLEIESTGSAVPVLRQYKTDGDQGLPRDLVLGTLVRFKQLKKWNLVSEILEWLRYQNWWNFSEIDFLMLITAYGKLGNFNGAERVLSVLSKMGSTPNVISYTALMESYGRGGKCNNAEAIFRRMQSSGPEPSAITYQIILKTFVEGDKFKEAEEVFETLLDEKKSPLKPDQKMYHMMIYMYKKAGNYEKARKVFSSMVGKGVPQSTVTYNSLMSFETSYKEVSKIYDQMQRSDIQPDVVSYALLIKAYGRARREEEALSVFEEMLDAGVRPTHKAYNILLDAFAISGMVEQAKTVFKSMRRDRIFPDLWSYTTMLSAYVNASDMEGAEKFFKRIKVDGFEPNIVTYGTLIKGYAKANDVEKMMEVYEKMRLSGIKANQTILTTIMDASGRCKNFGSALGWYKEMESCGVPPDQKAKNVLLSLASTQDELEEAKELTGIRNETATIIARVYGSDDDEEGVEDISSESSDDEDEGDDDDDDARETVLYDKPQEGSLGYGSLQTEELVGL.

PPR repeat units lie at residues 138-172 (SEIDFLMLITAYGKLGNFNGAERVLSVLSKMGSTP), 173-207 (NVISYTALMESYGRGGKCNNAEAIFRRMQSSGPEP), 208-242 (SAITYQIILKTFVEGDKFKEAEEVFETLLDEKKSP), 246-280 (DQKMYHMMIYMYKKAGNYEKARKVFSSMVGKGVPQ), 281-312 (STVTYNSLMSFETSYKEVSKIYDQMQRSDIQP), 313-347 (DVVSYALLIKAYGRARREEEALSVFEEMLDAGVRP), 348-382 (THKAYNILLDAFAISGMVEQAKTVFKSMRRDRIFP), 383-417 (DLWSYTTMLSAYVNASDMEGAEKFFKRIKVDGFEP), 418-452 (NIVTYGTLIKGYAKANDVEKMMEVYEKMRLSGIKA), and 453-487 (NQTILTTIMDASGRCKNFGSALGWYKEMESCGVPP). Positions 525–583 (VYGSDDDEEGVEDISSESSDDEDEGDDDDDDARETVLYDKPQEGSLGYGSLQTEELVGL) are disordered. The span at 528 to 556 (SDDDEEGVEDISSESSDDEDEGDDDDDDA) shows a compositional bias: acidic residues. The span at 557 to 566 (RETVLYDKPQ) shows a compositional bias: basic and acidic residues.

This sequence belongs to the PPR family. P subfamily.

This Arabidopsis thaliana (Mouse-ear cress) protein is Pentatricopeptide repeat-containing protein At3g59040.